The chain runs to 489 residues: Cytochrome P450 monooxygenase bfoB (489 aa).

The N-terminal stretch at 1–18 (MLALYLIAGLLVGLLVYR) is a signal peptide. 3 N-linked (GlcNAc...) asparagine glycosylation sites follow: Asn113, Asn348, and Asn386. A heme-binding site is contributed by Cys429.

Belongs to the cytochrome P450 family. Heme serves as cofactor.

The catalysed reaction is 2 fonsecin B + NADPH + O2 + H(+) = bifonsecin B + NADP(+) + 2 H2O. It carries out the reaction 2 rubrofusarin B + NADPH + O2 + 3 H(+) = nigerone + NADP(+) + 2 H2O. It functions in the pathway secondary metabolite biosynthesis. In terms of biological role, cytochrome P450 monooxygenase; part of the gene cluster that mediates the biosynthesis of bifonsecin B, a dimeric gamma-naphthopyrone. The first step in the biosynthesis of bifonsecin B is the production of gamma-naphthopyrone precursor YWA1 by the non-reducing polyketide synthase albA, via condensation of one acetyl-CoA starter unit with 6 malonyl-CoA units. YWA1 is then methylated by bfoE at position C-6 to yield foncesin which is further methylated at position C-8 by bfoD to produce fonsecin B. A key enzyme in the biosynthetic pathway is the cytochrome P450 monooxygenase bfoB which catalyzes the oxidative dimerization of fonsecin B to bifonsecin B. Bfob also catalyzes the oxidative dimerization of rubrofusarin B into nigerone. The stereoselectivity of bfoB is influenced by the two natural monomeric substrates; homodimerization of fonsecin B yields a stereochemically pure biaryl, M-foncerine B, while rubrofusarin B yields a mixture of enantiomers M- and P-nigerone. This chain is Cytochrome P450 monooxygenase bfoB, found in Aspergillus brasiliensis (strain CBS 101740 / IMI 381727 / IBT 21946).